A 1405-amino-acid polypeptide reads, in one-letter code: DNA-directed RNA polymerase subunit beta' (1405 aa).

Zn(2+) contacts are provided by Cys-70, Cys-72, Cys-85, and Cys-88. Mg(2+)-binding residues include Asp-460, Asp-462, and Asp-464. Zn(2+) is bound by residues Cys-814, Cys-888, Cys-895, and Cys-898.

The protein belongs to the RNA polymerase beta' chain family. As to quaternary structure, the RNAP catalytic core consists of 2 alpha, 1 beta, 1 beta' and 1 omega subunit. When a sigma factor is associated with the core the holoenzyme is formed, which can initiate transcription. The cofactor is Mg(2+). Zn(2+) serves as cofactor.

It carries out the reaction RNA(n) + a ribonucleoside 5'-triphosphate = RNA(n+1) + diphosphate. Its function is as follows. DNA-dependent RNA polymerase catalyzes the transcription of DNA into RNA using the four ribonucleoside triphosphates as substrates. The protein is DNA-directed RNA polymerase subunit beta' of Shewanella sp. (strain ANA-3).